The primary structure comprises 971 residues: Sodium/calcium exchanger 1 (971 aa).

Positions 1–32 are cleaved as a signal peptide; that stretch reads MLRLSLPPNVSMGFRLVTLVALLFTHVDHITA. Topologically, residues 33-71 are extracellular; it reads DTEAETGGNETTECTGSYYCKKGVILPIWEPQDPSFGDK. A glycan (N-linked (GlcNAc...) asparagine) is linked at N41. A helical transmembrane segment spans residues 72–92; sequence IARATVYFVAMVYMFLGVSII. Residues 93 to 133 are Cytoplasmic-facing; the sequence is ADRFMSSIEVITSQEKEITIKKPNGETTKTTVRIWNETVSN. The chain crosses the membrane as a helical span at residues 134 to 154; it reads LTLMALGSSAPEILLSVIEVC. The Alpha-1 repeat unit spans residues 138–178; it reads ALGSSAPEILLSVIEVCGHNFTAGDLGPSTIVGSAAFNMFI. Topologically, residues 155-167 are extracellular; the sequence is GHNFTAGDLGPST. N157 carries an N-linked (GlcNAc...) asparagine glycan. The chain crosses the membrane as a helical span at residues 168-188; the sequence is IVGSAAFNMFIIIALCVYVVP. Over 189-201 the chain is Cytoplasmic; the sequence is DGETRKIKHLRVF. A helical membrane pass occupies residues 202–222; that stretch reads FVTAAWSIFAYTWLYIILSVS. The Extracellular segment spans residues 223 to 228; the sequence is SPGVVE. A helical membrane pass occupies residues 229 to 249; the sequence is VWEGLLTFFFFPICVVFAWVA. At 250–798 the chain is on the cytoplasmic side; sequence DRRLLFYKYV…FVPPTEYWNG (549 aa). A putative calmodulin-binding region region spans residues 251–270; the sequence is RRLLFYKYVYKRYRAGKQRG. Residues S282 and S389 each carry the phosphoserine modification. 2 consecutive Calx-beta domains span residues 393–493 and 524–624; these read VNMD…VHLS and ATIT…IEIG. Ca(2+) contacts are provided by E417, D453, D478, D479, I481, E483, E486, D530, D531, D532, E548, D584, D610, E611, E612, and E716. Residues 799–819 traverse the membrane as a helical segment; that stretch reads WACFIVSILMIGLLTAFIGDL. At 820-822 the chain is on the extracellular side; the sequence is ASH. The helical transmembrane segment at 823 to 843 threads the bilayer; the sequence is FGCTIGLKDSVTAVVFVALGT. The Alpha-2 repeat unit spans residues 840–876; it reads ALGTSVPDTFASKVAATQDQYADASIGNVTGSNAVNV. Residues 844-872 lie on the Cytoplasmic side of the membrane; it reads SVPDTFASKVAATQDQYADASIGNVTGSN. Residues 873–893 traverse the membrane as a helical segment; the sequence is AVNVFLGIGVAWSIAAIYHAA. At 894-904 the chain is on the extracellular side; that stretch reads NGEQFKVSPGT. A helical transmembrane segment spans residues 905–925; sequence LAFSVTLFTIFAFINVGVLLY. Topologically, residues 926–942 are cytoplasmic; it reads RRRPEIGGELGGPRTAK. A helical membrane pass occupies residues 943–963; sequence LLTSSLFVLLWLLYIFFSSLE. Residues 964–971 are Extracellular-facing; sequence AYCHIKGF.

Belongs to the Ca(2+):cation antiporter (CaCA) (TC 2.A.19) family. SLC8 subfamily. In terms of tissue distribution, detected in heart, brain cortex and hippocampus (at protein level). Cardiac sarcolemma or brain, and spleen. Expressed in all regions of the kidney, highest levels of expression in the distal convoluted tubule. Expressed throughout the CNS, in decreasing order of abundance in hippocampus, cortex, cerebellum, hypothalamus, midbrain and striatum. Expressed in numerous regions of the brain including multiple cortical layers, hippocampus, septal nuclei, thalamic nuclei, cerebellum, hypothalamus, olfactory bulb and brainstem. Also expressed in various regions of the spinal cord, ventricles and atria of the heart, lung, adrenals and kidney. Isoform 4 seems to be a predominant isoform in aorta, stomach, liver, and kidney.

It is found in the cell membrane. The protein resides in the cell projection. The protein localises to the dendrite. It carries out the reaction Ca(2+)(in) + 3 Na(+)(out) = Ca(2+)(out) + 3 Na(+)(in). Activated by micromolar levels of Ca(2+). With respect to regulation, only active at low calcium concentrations. Not activated by PKC. Its activity is regulated as follows. Active at all calcium levels tested. Activated by PKC. Only active at low calcium concentrations. Activated by PKC. In terms of biological role, mediates the exchange of one Ca(2+) ion against three to four Na(+) ions across the cell membrane, and thereby contributes to the regulation of cytoplasmic Ca(2+) levels and Ca(2+)-dependent cellular processes. Contributes to Ca(2+) transport during excitation-contraction coupling in muscle. In a first phase, voltage-gated channels mediate the rapid increase of cytoplasmic Ca(2+) levels due to release of Ca(2+) stores from the endoplasmic reticulum. SLC8A1 mediates the export of Ca(2+) from the cell during the next phase, so that cytoplasmic Ca(2+) levels rapidly return to baseline. Required for normal embryonic heart development and the onset of heart contractions. The protein is Sodium/calcium exchanger 1 (Slc8a1) of Rattus norvegicus (Rat).